A 910-amino-acid polypeptide reads, in one-letter code: DNA mismatch repair protein MutS (910 aa).

Residues 1–11 are compositionally biased toward basic and acidic residues; the sequence is MEAKVEEKEPE. The segment at 1–21 is disordered; the sequence is MEAKVEEKEPEPVENAGPDAP. Position 658 to 665 (658 to 665) interacts with ATP; that stretch reads GPNMGGKS.

It belongs to the DNA mismatch repair MutS family.

This protein is involved in the repair of mismatches in DNA. It is possible that it carries out the mismatch recognition step. This protein has a weak ATPase activity. The sequence is that of DNA mismatch repair protein MutS from Brucella suis (strain ATCC 23445 / NCTC 10510).